The primary structure comprises 230 residues: Large ribosomal subunit protein uL1 (230 aa).

It belongs to the universal ribosomal protein uL1 family. In terms of assembly, part of the 50S ribosomal subunit.

Binds directly to 23S rRNA. The L1 stalk is quite mobile in the ribosome, and is involved in E site tRNA release. In terms of biological role, protein L1 is also a translational repressor protein, it controls the translation of the L11 operon by binding to its mRNA. This Leuconostoc mesenteroides subsp. mesenteroides (strain ATCC 8293 / DSM 20343 / BCRC 11652 / CCM 1803 / JCM 6124 / NCDO 523 / NBRC 100496 / NCIMB 8023 / NCTC 12954 / NRRL B-1118 / 37Y) protein is Large ribosomal subunit protein uL1.